The following is a 131-amino-acid chain: Small ribosomal subunit protein uS9 (131 aa).

The interval 102 to 131 (AGFLTRDPRMKERRKYGLKKARKAPQFSKR) is disordered. The span at 112–131 (KERRKYGLKKARKAPQFSKR) shows a compositional bias: basic residues.

It belongs to the universal ribosomal protein uS9 family.

The chain is Small ribosomal subunit protein uS9 from Desulfitobacterium hafniense (strain DSM 10664 / DCB-2).